Reading from the N-terminus, the 242-residue chain is Protein HTATIP2 (242 aa).

A2 carries the post-translational modification N-acetylalanine. Residues 2-25 (AETEALSKLREDFRMQNKSVFILG) are required for interaction with elongation factor EEF1A1. S27, G28, E29, T30, R52, R53, L92, G93, Y143, K147, L170, and R178 together coordinate NADPH. The active-site Proton acceptor is Y143. K147 is an active-site residue.

As to quaternary structure, monomer. Forms homodimers during oxidative stress. Interacts (via N-terminus) with elongation factor EEF1A1 (via middle-region); the interaction is direct and competes with EEF1A1 binding to guanyl-nucleotide exchange factor EEF1B2, thereby inhibiting GDP for GTP exchange and reactivation of EEF1A1. Interacts with nuclear transport receptors XPO4, IPO5/RANBP5, IPO7, IPO9 and KPNB1 as well as GCN1L1/GCN1 and LRPPRC probably through their HEAT repeats. Binds NCOA5/CIA.

The protein localises to the cytoplasm. In terms of biological role, represses translation by preventing reactivation of elongation factor eEF1A. May also inhibit nuclear import by competing with nuclear import substrates for binding to a subset of nuclear transport receptors. Has additionally been proposed to act as a redox sensor involved in cellular oxidative stress surveillance. This is Protein HTATIP2 (HTATIP2) from Gorilla gorilla gorilla (Western lowland gorilla).